The sequence spans 592 residues: Proteasome-associated ATPase (592 aa).

Over residues 1–11 the composition is skewed to acidic residues; the sequence is MTGYDSSEEAE. Residues 1 to 24 are disordered; the sequence is MTGYDSSEEAERDSSPADGYRQTP. The stretch at 25-99 forms a coiled coil; sequence AQLSAQIRVL…LKEEVDRLAQ (75 aa). An ATP-binding site is contributed by 281-286; that stretch reads GCGKTL. Residues 591–592 form a docks into pockets in the proteasome alpha-ring region; sequence YL.

It belongs to the AAA ATPase family. In terms of assembly, homohexamer. Assembles into a hexameric ring structure that caps the 20S proteasome core. Strongly interacts with the prokaryotic ubiquitin-like protein Pup through a hydrophobic interface; the interacting region of ARC lies in its N-terminal coiled-coil domain. There is one Pup binding site per ARC hexamer ring. Upon ATP-binding, the C-terminus of ARC interacts with the alpha-rings of the proteasome core, possibly by binding to the intersubunit pockets.

It participates in protein degradation; proteasomal Pup-dependent pathway. Its function is as follows. ATPase which is responsible for recognizing, binding, unfolding and translocation of pupylated proteins into the bacterial 20S proteasome core particle. May be essential for opening the gate of the 20S proteasome via an interaction with its C-terminus, thereby allowing substrate entry and access to the site of proteolysis. Thus, the C-termini of the proteasomal ATPase may function like a 'key in a lock' to induce gate opening and therefore regulate proteolysis. This Nakamurella multipartita (strain ATCC 700099 / DSM 44233 / CIP 104796 / JCM 9543 / NBRC 105858 / Y-104) (Microsphaera multipartita) protein is Proteasome-associated ATPase.